A 361-amino-acid chain; its full sequence is Phosphoribosylformylglycinamidine cyclo-ligase (361 aa).

This sequence belongs to the AIR synthase family.

The protein resides in the cytoplasm. The enzyme catalyses 2-formamido-N(1)-(5-O-phospho-beta-D-ribosyl)acetamidine + ATP = 5-amino-1-(5-phospho-beta-D-ribosyl)imidazole + ADP + phosphate + H(+). It functions in the pathway purine metabolism; IMP biosynthesis via de novo pathway; 5-amino-1-(5-phospho-D-ribosyl)imidazole from N(2)-formyl-N(1)-(5-phospho-D-ribosyl)glycinamide: step 2/2. The chain is Phosphoribosylformylglycinamidine cyclo-ligase from Bartonella quintana (strain Toulouse) (Rochalimaea quintana).